Reading from the N-terminus, the 104-residue chain is L-rhamnose mutarotase (104 aa).

Residue Tyr18 participates in substrate binding. The active-site Proton donor is the His22. Residues Tyr41 and 76 to 77 contribute to the substrate site; that span reads WW.

The protein belongs to the rhamnose mutarotase family. In terms of assembly, homodimer.

The protein resides in the cytoplasm. The catalysed reaction is alpha-L-rhamnose = beta-L-rhamnose. It participates in carbohydrate metabolism; L-rhamnose metabolism. Involved in the anomeric conversion of L-rhamnose. The polypeptide is L-rhamnose mutarotase (Burkholderia orbicola (strain MC0-3)).